We begin with the raw amino-acid sequence, 302 residues long: Nucleoside kinase (302 aa).

The substrate site is built by aspartate 17, glutamine 33, glycine 43, and asparagine 47. An ATP-binding site is contributed by glutamine 109. Substrate contacts are provided by residues 111–113 and glutamine 163; that span reads TFF. ATP-binding positions include asparagine 186 and 214-219; that span reads TKGSKG. Residue aspartate 247 coordinates substrate. The active-site Proton acceptor is aspartate 247.

As to quaternary structure, homodimer. Mg(2+) serves as cofactor. Requires Mn(2+) as cofactor.

It carries out the reaction cytidine + ATP = CMP + ADP + H(+). The enzyme catalyses guanosine + ATP = GMP + ADP + H(+). It catalyses the reaction inosine + ATP = IMP + ADP + H(+). Its function is as follows. Catalyzes the phosphorylation of a wide range of nucleosides to yield nucleoside monophosphates. Shows the highest activity for inosine, guanosine and cytidine, but very poor kinase activity with adenosine, thymidine, uridine and xanthosine. ATP is the best phosphate donor, but can also use ITP and GTP. Shows extremely low activity with fructose-6-phosphate. This Methanocaldococcus jannaschii (strain ATCC 43067 / DSM 2661 / JAL-1 / JCM 10045 / NBRC 100440) (Methanococcus jannaschii) protein is Nucleoside kinase.